Reading from the N-terminus, the 3092-residue chain is Probable polyketide synthase 45 (3092 aa).

The region spanning 10 to 430 (DNDVAIIGIG…GSNVCLILTE (421 aa)) is the Ketosynthase family 3 (KS3) domain. Residues Cys170, His315, and His353 each act as for beta-ketoacyl synthase activity in the active site. The tract at residues 640–673 (GILASISIGHSLGEVSSAVCSGMIDLETGCFIIY) is acyl/malonyl transferase. Residue Ser650 is the For acyl/malonyl transferase activity of the active site. Positions 967–1087 (INQLGNRNER…GKFSITKHND (121 aa)) are N-terminal hotdog fold. Residues 967–1254 (INQLGNRNER…YTQLTPYKNQ (288 aa)) form the PKS/mFAS DH domain. The active-site Proton acceptor; for dehydratase activity is the His999. Positions 1103-1254 (NFVTIQKKEL…YTQLTPYKNQ (152 aa)) are C-terminal hotdog fold. Residue Asp1165 is the Proton donor; for dehydratase activity of the active site. One can recognise a Carrier domain in the interval 2566–2644 (SDDLSIREEI…QLIQSVTDAM (79 aa)). The residue at position 2604 (Ser2604) is an O-(pantetheine 4'-phosphoryl)serine. Residues 2705 to 2725 (NTVFLTGSSGFIGIYILFYLI) form a helical membrane-spanning segment.

The cofactor is pantetheine 4'-phosphate.

Its subcellular location is the membrane. Probable polyketide synthase. The protein is Probable polyketide synthase 45 (pks45) of Dictyostelium discoideum (Social amoeba).